The chain runs to 139 residues: Large ribosomal subunit protein uL22 (139 aa).

Residues V118–R139 are disordered. Over residues K125–R139 the composition is skewed to basic residues.

It belongs to the universal ribosomal protein uL22 family. Part of the 50S ribosomal subunit.

Its function is as follows. This protein binds specifically to 23S rRNA; its binding is stimulated by other ribosomal proteins, e.g. L4, L17, and L20. It is important during the early stages of 50S assembly. It makes multiple contacts with different domains of the 23S rRNA in the assembled 50S subunit and ribosome. In terms of biological role, the globular domain of the protein is located near the polypeptide exit tunnel on the outside of the subunit, while an extended beta-hairpin is found that lines the wall of the exit tunnel in the center of the 70S ribosome. The protein is Large ribosomal subunit protein uL22 of Saccharopolyspora erythraea (strain ATCC 11635 / DSM 40517 / JCM 4748 / NBRC 13426 / NCIMB 8594 / NRRL 2338).